A 261-amino-acid chain; its full sequence is Thiamine thiazole synthase (261 aa).

Residues alanine 33, glutamate 52 to arginine 53, glycine 60, valine 124, and histidine 152 to aspartate 154 contribute to the NAD(+) site. 2 residues coordinate Fe cation: aspartate 154 and histidine 169. An NAD(+)-binding site is contributed by isoleucine 219. Arginine 229 lines the glycine pocket.

Belongs to the THI4 family. Homooctamer; tetramer of dimers. Requires Fe(2+) as cofactor.

The catalysed reaction is hydrogen sulfide + glycine + NAD(+) = ADP-5-ethyl-4-methylthiazole-2-carboxylate + nicotinamide + 3 H2O + H(+). It participates in cofactor biosynthesis; thiamine diphosphate biosynthesis. In terms of biological role, involved in the biosynthesis of the thiazole moiety of thiamine. Catalyzes the conversion of NAD and glycine to adenosine diphosphate 5-(2-hydroxyethyl)-4-methylthiazole-2-carboxylate (ADT), an adenylated thiazole intermediate, using free sulfide as a source of sulfur. This chain is Thiamine thiazole synthase, found in Pyrobaculum calidifontis (strain DSM 21063 / JCM 11548 / VA1).